A 573-amino-acid polypeptide reads, in one-letter code: E3 ubiquitin-protein ligase TRIM23 (573 aa).

An RING-type; degenerate zinc finger spans residues 31 to 76 (CGVCEDVFSLQGDKVPRLLLCGHTVCHDCLTRLPLHGRAIRCPFDR). Residues 122 to 168 (ESIIRCDEDEAHVASVYCTVCATHLCSECSQVTHSTKTLAKHRRVPL) form a B box-type; degenerate zinc finger. A coiled-coil region spans residues 351 to 378 (RVVLAKQEITRLLETLQKQQQQFTEVAD). Residues 390–573 (FTKDNRVYHG…LVAAGVLDVA (184 aa)) form an ARF-like region. Residues 411–418 (LDGAGKTT), 454–458 (VGGKH), and 513–516 (KQDV) contribute to the GTP site.

The protein in the C-terminal section; belongs to the small GTPase superfamily. Arf family. As to quaternary structure, homodimer. Interacts with PSCD1. Interacts with UBE2D2. Interacts with TBK1 (via N-terminal kinase domain) and p62/SQSTM1.

It is found in the cytoplasm. Its subcellular location is the endomembrane system. The protein localises to the golgi apparatus membrane. The protein resides in the lysosome membrane. The enzyme catalyses S-ubiquitinyl-[E2 ubiquitin-conjugating enzyme]-L-cysteine + [acceptor protein]-L-lysine = [E2 ubiquitin-conjugating enzyme]-L-cysteine + N(6)-ubiquitinyl-[acceptor protein]-L-lysine.. The protein operates within protein modification; protein ubiquitination. Acts as an E3 ubiquitin-protein ligase. Plays an essential role in autophagy activation during viral infection. Mechanistically, activates TANK-binding kinase 1/TBK1 by facilitating its dimerization and ability to phosphorylate the selective autophagy receptor SQSTM1. In order to achieve this function, TRIM23 mediates 'Lys-27'-linked auto-ubiquitination of its ADP-ribosylation factor (ARF) domain to induce its GTPase activity and its recruitment to autophagosomes. This Rattus norvegicus (Rat) protein is E3 ubiquitin-protein ligase TRIM23 (Trim23).